A 170-amino-acid polypeptide reads, in one-letter code: Ribosome-binding factor A (170 aa).

Positions 123–170 (AKAGVYAGDEDPYVKPRVIGEDEDDDDEEGDEDGDDVDRSAPGYEPAH) are disordered. Positions 143-158 (EDEDDDDEEGDEDGDD) are enriched in acidic residues.

It belongs to the RbfA family. In terms of assembly, monomer. Binds 30S ribosomal subunits, but not 50S ribosomal subunits or 70S ribosomes.

The protein localises to the cytoplasm. Functionally, one of several proteins that assist in the late maturation steps of the functional core of the 30S ribosomal subunit. Associates with free 30S ribosomal subunits (but not with 30S subunits that are part of 70S ribosomes or polysomes). Required for efficient processing of 16S rRNA. May interact with the 5'-terminal helix region of 16S rRNA. The protein is Ribosome-binding factor A of Clavibacter sepedonicus (Clavibacter michiganensis subsp. sepedonicus).